A 337-amino-acid polypeptide reads, in one-letter code: 1-aminocyclopropane-1-carboxylate deaminase (337 aa).

Lysine 50 carries the post-translational modification N6-(pyridoxal phosphate)lysine.

This sequence belongs to the ACC deaminase/D-cysteine desulfhydrase family. As to quaternary structure, homotrimer. It depends on pyridoxal 5'-phosphate as a cofactor.

The catalysed reaction is 1-aminocyclopropane-1-carboxylate + H2O = 2-oxobutanoate + NH4(+). In terms of biological role, catalyzes a cyclopropane ring-opening reaction, the irreversible conversion of 1-aminocyclopropane-1-carboxylate (ACC) to ammonia and alpha-ketobutyrate. Allows growth on ACC as a nitrogen source. This chain is 1-aminocyclopropane-1-carboxylate deaminase, found in Mesorhizobium japonicum (strain LMG 29417 / CECT 9101 / MAFF 303099) (Mesorhizobium loti (strain MAFF 303099)).